A 227-amino-acid polypeptide reads, in one-letter code: Cytochrome c oxidase subunit 2 (227 aa).

At 1–14 the chain is on the mitochondrial intermembrane side; that stretch reads MAYPLQLGFQDATS. Residues 15-45 traverse the membrane as a helical segment; that stretch reads PVMEELLHFHDHTLMIIFLISSLVLYIIMLM. The Mitochondrial matrix segment spans residues 46 to 59; the sequence is LTTKLIHTNMMNVQ. A helical transmembrane segment spans residues 60 to 87; that stretch reads EMEMIWTILPAIILILIALPSLHTLYMM. The Mitochondrial intermembrane segment spans residues 88–227; it reads DEINNPLLTI…YFESWSASLA (140 aa). 6 residues coordinate Cu cation: histidine 161, cysteine 196, glutamate 198, cysteine 200, histidine 204, and methionine 207. Residue glutamate 198 coordinates Mg(2+). At tyrosine 218 the chain carries Phosphotyrosine.

The protein belongs to the cytochrome c oxidase subunit 2 family. Component of the cytochrome c oxidase (complex IV, CIV), a multisubunit enzyme composed of 14 subunits. The complex is composed of a catalytic core of 3 subunits MT-CO1, MT-CO2 and MT-CO3, encoded in the mitochondrial DNA, and 11 supernumerary subunits COX4I, COX5A, COX5B, COX6A, COX6B, COX6C, COX7A, COX7B, COX7C, COX8 and NDUFA4, which are encoded in the nuclear genome. The complex exists as a monomer or a dimer and forms supercomplexes (SCs) in the inner mitochondrial membrane with NADH-ubiquinone oxidoreductase (complex I, CI) and ubiquinol-cytochrome c oxidoreductase (cytochrome b-c1 complex, complex III, CIII), resulting in different assemblies (supercomplex SCI(1)III(2)IV(1) and megacomplex MCI(2)III(2)IV(2)). Found in a complex with TMEM177, COA6, COX18, COX20, SCO1 and SCO2. Interacts with TMEM177 in a COX20-dependent manner. Interacts with COX20. Interacts with COX16. The cofactor is Cu cation.

The protein localises to the mitochondrion inner membrane. The enzyme catalyses 4 Fe(II)-[cytochrome c] + O2 + 8 H(+)(in) = 4 Fe(III)-[cytochrome c] + 2 H2O + 4 H(+)(out). Functionally, component of the cytochrome c oxidase, the last enzyme in the mitochondrial electron transport chain which drives oxidative phosphorylation. The respiratory chain contains 3 multisubunit complexes succinate dehydrogenase (complex II, CII), ubiquinol-cytochrome c oxidoreductase (cytochrome b-c1 complex, complex III, CIII) and cytochrome c oxidase (complex IV, CIV), that cooperate to transfer electrons derived from NADH and succinate to molecular oxygen, creating an electrochemical gradient over the inner membrane that drives transmembrane transport and the ATP synthase. Cytochrome c oxidase is the component of the respiratory chain that catalyzes the reduction of oxygen to water. Electrons originating from reduced cytochrome c in the intermembrane space (IMS) are transferred via the dinuclear copper A center (CU(A)) of subunit 2 and heme A of subunit 1 to the active site in subunit 1, a binuclear center (BNC) formed by heme A3 and copper B (CU(B)). The BNC reduces molecular oxygen to 2 water molecules using 4 electrons from cytochrome c in the IMS and 4 protons from the mitochondrial matrix. In Elephas maximus (Indian elephant), this protein is Cytochrome c oxidase subunit 2 (MT-CO2).